We begin with the raw amino-acid sequence, 358 residues long: Probable BOI-related E3 ubiquitin-protein ligase 2 (358 aa).

Residues Lys171 to Thr234 are a coiled coil. Residues Leu214–Leu250 are WRD domain. The RING-type zinc-finger motif lies at Cys310–Thr345.

As to quaternary structure, interacts with the DELLA proteins GAI, RGA, RGL1, RGL2 and RGL3.

The enzyme catalyses S-ubiquitinyl-[E2 ubiquitin-conjugating enzyme]-L-cysteine + [acceptor protein]-L-lysine = [E2 ubiquitin-conjugating enzyme]-L-cysteine + N(6)-ubiquitinyl-[acceptor protein]-L-lysine.. Its pathway is protein degradation; proteasomal ubiquitin-dependent pathway. Its function is as follows. Probable E3 ubiquitin-protein ligase. Has no effect on the stability of the DELLA proteins. The polypeptide is Probable BOI-related E3 ubiquitin-protein ligase 2 (BRG2) (Arabidopsis thaliana (Mouse-ear cress)).